Reading from the N-terminus, the 130-residue chain is uncharacterized protein (130 aa).

2 helical membrane passes run 35–57 (FLITLLSALFVIFILLLVSFISL) and 72–91 (IVFFAISAGAFFLILILLLL).

It is found in the cell membrane. This is an uncharacterized protein from Pasteurella multocida (strain Pm70).